The following is a 672-amino-acid chain: MSKAFKLTSKFKPSGDQPQAIEKLVAGLEDGLAYQTLLGVTGSGKTFTIANAIEKVQRPTLILEPNKTLAAQFYAEMREFFPENAVEYFVSYYDYYQPEAYVPSSDTYIEKDASINDHIEQMRLSATKAITERHDTIIIATVSAIYGLGDPDSYLKMLLHLTRGDQIDQRKILQRLAELQYTRNDLELRRATYRVNGDIIDIYPADSEREAVRVELFDDEVENLSYFDPLTGEMLRRVPRITVYPKTHYVTPREKLLSTLDQIKIELKERLSQLEKANKLVERQRLEQRTKFDMEMILELGYCSGIENYSRYLSGRNEGEPPPTLIDYLPKDALLIIDESHVTIPQLGGMYRGDRARKETLVEYGFRLPSALDNRPLRFDEFEKLAPQTIFISATPGPYEEKQSDQVVELLVRPTGLIDPEIEVRPVATQVDDLLSEIKKRAAQNERVLVTTLTKRMAEDLTEYFTEHNVRVRYLHSDIDTVERVEIIRDLRLGVFDVLVGINLLREGLDIPEVSLVAILDADKEGFLRSERSLIQTMGRAARNVHGKAILYADRITDSMKRAMEEAERRRIAQSAYNEKHHITPKSIQKAVTEIIEGARTYTERGRFVNQAQLIAEEESKYIAMTPKQLAKELRKLEEQMYHHARNLEFEEAAAVRDKIQHIRKGLLEVKE.

Positions 26 to 181 (AGLEDGLAYQ…ILQRLAELQY (156 aa)) constitute a Helicase ATP-binding domain. Residue 39–46 (GVTGSGKT) participates in ATP binding. The short motif at 92–115 (YYDYYQPEAYVPSSDTYIEKDASI) is the Beta-hairpin element. The Helicase C-terminal domain occupies 430–592 (QVDDLLSEIK…ITPKSIQKAV (163 aa)). The UVR domain occupies 631–666 (AKELRKLEEQMYHHARNLEFEEAAAVRDKIQHIRKG).

The protein belongs to the UvrB family. Forms a heterotetramer with UvrA during the search for lesions. Interacts with UvrC in an incision complex.

It is found in the cytoplasm. Functionally, the UvrABC repair system catalyzes the recognition and processing of DNA lesions. A damage recognition complex composed of 2 UvrA and 2 UvrB subunits scans DNA for abnormalities. Upon binding of the UvrA(2)B(2) complex to a putative damaged site, the DNA wraps around one UvrB monomer. DNA wrap is dependent on ATP binding by UvrB and probably causes local melting of the DNA helix, facilitating insertion of UvrB beta-hairpin between the DNA strands. Then UvrB probes one DNA strand for the presence of a lesion. If a lesion is found the UvrA subunits dissociate and the UvrB-DNA preincision complex is formed. This complex is subsequently bound by UvrC and the second UvrB is released. If no lesion is found, the DNA wraps around the other UvrB subunit that will check the other stand for damage. This is UvrABC system protein B from Coxiella burnetii (strain Dugway 5J108-111).